The primary structure comprises 274 residues: Large ribosomal subunit protein uL2 (274 aa).

The disordered stretch occupies residues 223–274 (VAMNPVDHPMGGGEGKASGGHPRSRTGLYAKGKKTRNTNKYSKNYILSRKKR).

It belongs to the universal ribosomal protein uL2 family. As to quaternary structure, part of the 50S ribosomal subunit. Forms a bridge to the 30S subunit in the 70S ribosome.

One of the primary rRNA binding proteins. Required for association of the 30S and 50S subunits to form the 70S ribosome, for tRNA binding and peptide bond formation. It has been suggested to have peptidyltransferase activity; this is somewhat controversial. Makes several contacts with the 16S rRNA in the 70S ribosome. In Amoebophilus asiaticus (strain 5a2), this protein is Large ribosomal subunit protein uL2.